The sequence spans 325 residues: Tagatose 1,6-diphosphate aldolase 1 (325 aa).

This sequence belongs to the aldolase LacD family.

The catalysed reaction is D-tagatofuranose 1,6-bisphosphate = D-glyceraldehyde 3-phosphate + dihydroxyacetone phosphate. It functions in the pathway carbohydrate metabolism; D-tagatose 6-phosphate degradation; D-glyceraldehyde 3-phosphate and glycerone phosphate from D-tagatose 6-phosphate: step 2/2. The protein is Tagatose 1,6-diphosphate aldolase 1 of Streptococcus agalactiae serotype III (strain NEM316).